The chain runs to 283 residues: Spore coat polysaccharide biosynthesis protein SpsK (283 aa).

Belongs to the dTDP-4-dehydrorhamnose reductase family.

It participates in spore coat biogenesis; spore coat polysaccharide biosynthesis. This is Spore coat polysaccharide biosynthesis protein SpsK (spsK) from Bacillus subtilis (strain 168).